Reading from the N-terminus, the 248-residue chain is Octanoyltransferase (248 aa).

The region spanning 53–238 is the BPL/LPL catalytic domain; the sequence is ADTGDEIWVV…NLDGASAAAD (186 aa). Substrate contacts are provided by residues 93–100, 165–167, and 178–180; these read RGGQITYH, ALG, and GLS. The active-site Acyl-thioester intermediate is the C196.

The protein belongs to the LipB family.

The protein localises to the cytoplasm. The enzyme catalyses octanoyl-[ACP] + L-lysyl-[protein] = N(6)-octanoyl-L-lysyl-[protein] + holo-[ACP] + H(+). It functions in the pathway protein modification; protein lipoylation via endogenous pathway; protein N(6)-(lipoyl)lysine from octanoyl-[acyl-carrier-protein]: step 1/2. Its function is as follows. Catalyzes the transfer of endogenously produced octanoic acid from octanoyl-acyl-carrier-protein onto the lipoyl domains of lipoate-dependent enzymes. Lipoyl-ACP can also act as a substrate although octanoyl-ACP is likely to be the physiological substrate. The chain is Octanoyltransferase from Burkholderia orbicola (strain MC0-3).